We begin with the raw amino-acid sequence, 584 residues long: Protein disulfide-isomerase-like protein of the testis (584 aa).

Positions 1-20 (MDLLWMPLLLVAACVSAVHS) are cleaved as a signal peptide. N-linked (GlcNAc...) asparagine glycans are attached at residues Asn-58, Asn-128, Asn-160, and Asn-340. The region spanning 388–451 (LVKQLVGKNF…IAKIDVTAND (64 aa)) is the Thioredoxin domain. An N-linked (GlcNAc...) asparagine glycan is attached at Asn-540. The short motif at 581–584 (KEEL) is the Prevents secretion from ER element.

It belongs to the protein disulfide isomerase family. In terms of assembly, homodimer. The homodimer is not disulfide-linked. Interacts with ERO1A and CLGN. N-glycosylated. Testis-specific.

It is found in the endoplasmic reticulum. Probable redox-inactive chaperone involved in spermatogenesis. The sequence is that of Protein disulfide-isomerase-like protein of the testis (PDILT) from Homo sapiens (Human).